The sequence spans 995 residues: Pheromone-regulated membrane protein 10 (995 aa).

4 disordered regions span residues 1–217 (MSSH…GEKH), 253–299 (GRVL…AVEM), 326–407 (DQSF…YIAP), and 425–508 (NPQD…NPDQ). The span at 74 to 88 (SNSSTTNNSTESSGS) shows a compositional bias: low complexity. Basic and acidic residues predominate over residues 110–121 (VKGESGDAHEGS). The segment covering 157–166 (SRGSVGSSSS) has biased composition (low complexity). Basic and acidic residues predominate over residues 170–187 (KGSDDVNEKETNLDHDYD). Residues 259–269 (GSGGGGGGGLI) show a composition bias toward gly residues. Acidic residues predominate over residues 283–296 (EEKEVGGGGEDDGA). Polar residues predominate over residues 326-347 (DQSFTYDEPNQSAGSSRNSTAP). Basic and acidic residues-rich tracts occupy residues 359–371 (DDHK…DQGK) and 385–396 (GNDDPEDQHLLL). Positions 495–506 (EADDEDEDEENP) are enriched in acidic residues. Helical transmembrane passes span 678–698 (VFLY…GGWL), 700–720 (IPVT…VSSM), 726–746 (SVFE…IGSI), 752–772 (FCFS…YIIL), 794–814 (IIYS…FGWV), 833–850 (KYRI…GLIN), 858–878 (PVMM…GKHF), 881–901 (VPEF…NVYS), 906–926 (GMAV…GIAS), and 965–985 (VEVS…VYPF).

The protein belongs to the ThrE exporter (TC 2.A.79) family.

The protein localises to the membrane. In Pichia sorbitophila (strain ATCC MYA-4447 / BCRC 22081 / CBS 7064 / NBRC 10061 / NRRL Y-12695) (Hybrid yeast), this protein is Pheromone-regulated membrane protein 10.